The sequence spans 127 residues: Large ribosomal subunit protein bL12 (127 aa).

It belongs to the bacterial ribosomal protein bL12 family. Homodimer. Part of the ribosomal stalk of the 50S ribosomal subunit. Forms a multimeric L10(L12)X complex, where L10 forms an elongated spine to which 2 to 4 L12 dimers bind in a sequential fashion. Binds GTP-bound translation factors.

Functionally, forms part of the ribosomal stalk which helps the ribosome interact with GTP-bound translation factors. Is thus essential for accurate translation. This chain is Large ribosomal subunit protein bL12, found in Leptospira interrogans serogroup Icterohaemorrhagiae serovar copenhageni (strain Fiocruz L1-130).